A 453-amino-acid chain; its full sequence is tRNA modification GTPase MnmE (453 aa).

Positions 22, 79, and 119 each coordinate (6S)-5-formyl-5,6,7,8-tetrahydrofolate. One can recognise a TrmE-type G domain in the interval 215–376; that stretch reads GMKVVIAGRP…LKQHLKSLMG (162 aa). Position 225 (N225) interacts with K(+). Residues 225 to 230, 244 to 250, 269 to 272, and 334 to 337 each bind GTP; these read NAGKSS, TEIAGTT, DTAG, and NKAD. S229 is a binding site for Mg(2+). K(+)-binding residues include T244, I246, and T249. Position 250 (T250) interacts with Mg(2+). K453 is a binding site for (6S)-5-formyl-5,6,7,8-tetrahydrofolate.

The protein belongs to the TRAFAC class TrmE-Era-EngA-EngB-Septin-like GTPase superfamily. TrmE GTPase family. Homodimer. Heterotetramer of two MnmE and two MnmG subunits. Requires K(+) as cofactor.

It localises to the cytoplasm. Functionally, exhibits a very high intrinsic GTPase hydrolysis rate. Involved in the addition of a carboxymethylaminomethyl (cmnm) group at the wobble position (U34) of certain tRNAs, forming tRNA-cmnm(5)s(2)U34. The polypeptide is tRNA modification GTPase MnmE (Shewanella denitrificans (strain OS217 / ATCC BAA-1090 / DSM 15013)).